The primary structure comprises 555 residues: uncharacterized protein (555 aa).

An N-terminal signal peptide occupies residues 1–28 (MRSGLFGVLRWTAVGLVATLVASLALTA). Cysteine 29 is lipidated: N-palmitoyl cysteine. Cysteine 29 carries the S-diacylglycerol cysteine lipid modification.

The protein to M.tuberculosis Rv2585c and M.bovis Mb2616c.

The protein localises to the cell membrane. This is an uncharacterized protein from Mycobacterium leprae (strain TN).